The chain runs to 316 residues: Probable cell division protein WhiA (316 aa).

The segment at residues 274-308 (SLKELGEMVSTGVISKSGVNHRLRKIDEIAEKLRN) is a DNA-binding region (H-T-H motif).

This sequence belongs to the WhiA family.

In terms of biological role, involved in cell division and chromosome segregation. This chain is Probable cell division protein WhiA, found in Macrococcus caseolyticus (strain JCSC5402) (Macrococcoides caseolyticum).